A 177-amino-acid polypeptide reads, in one-letter code: GTP-dependent dephospho-CoA kinase (177 aa).

6 residues coordinate GTP: D48, V49, V50, D67, K69, and E124.

The protein belongs to the GTP-dependent DPCK family.

It carries out the reaction 3'-dephospho-CoA + GTP = GDP + CoA + H(+). It participates in cofactor biosynthesis; coenzyme A biosynthesis. In terms of biological role, catalyzes the GTP-dependent phosphorylation of the 3'-hydroxyl group of dephosphocoenzyme A to form coenzyme A (CoA). In Pyrococcus furiosus (strain ATCC 43587 / DSM 3638 / JCM 8422 / Vc1), this protein is GTP-dependent dephospho-CoA kinase.